The primary structure comprises 372 residues: MDVESKISLILRYPTEEVITVEELRELLQLGHQLNHYIGFEISGFIHIGTGIVSMSKVVDLQRAGVRTQILLADIHSWLNNKLGGDLDTIRKVAVTYYIEAFKKVIETLGGDPDATRFVLGSDLYHHNDEYWLLLMDITRHLTLSQVRHSLTILGRKMGESIPLAYLVYPPLQVADVFALGAHIPHGGVDQRRAHILARQVADKIRFYPLEVGGKRVKPVALHHKLLPALNISTKPSNKEELSEMKMSKSVPQSAIFIHDSPEEIRQKISKAYCPPRETEYNPVLELLHISAFREERKTPFIIKRPPQYGGDIEVWTYEEVERLYREGKIHPADLKNATAEALINILEPIYKYFQGPGAKLLQEMKNITITR.

L-tyrosine contacts are provided by Y37, Y169, Q173, D176, and Q191. The 'KMSKS' region motif lies at 246–250 (KMSKS). K249 is a binding site for ATP.

The protein belongs to the class-I aminoacyl-tRNA synthetase family. TyrS type 4 subfamily. As to quaternary structure, homodimer.

It is found in the cytoplasm. The enzyme catalyses tRNA(Tyr) + L-tyrosine + ATP = L-tyrosyl-tRNA(Tyr) + AMP + diphosphate + H(+). Functionally, catalyzes the attachment of tyrosine to tRNA(Tyr) in a two-step reaction: tyrosine is first activated by ATP to form Tyr-AMP and then transferred to the acceptor end of tRNA(Tyr). The protein is Tyrosine--tRNA ligase 1 of Pyrobaculum aerophilum (strain ATCC 51768 / DSM 7523 / JCM 9630 / CIP 104966 / NBRC 100827 / IM2).